The sequence spans 274 residues: MSDNEIVAGIMRDHIINLLKEGKRIDDRGFEDYRPIEIEVGVIEKAEGSALVKLGSTQVLVGIKTSLGEPFPDTPNMGVMTTNVELVPLASPTFEPGPPDERAIELARVIDRGIRESKALNLEKMVIVPGKIVRVVFIDVHVLDHDGNLMDAIGIAAIAALLNARVPKVRYNEETGEVETLDETEPLPVEKIPVPVTFAKIGNILVVDPSLDEELVMDGKITITTDETGHISAVQKSEGGAFKLEEVMYAVETAFKKAEEIRKLILEAVEKAKQ.

It belongs to the RNase PH family. Rrp42 subfamily. As to quaternary structure, component of the archaeal exosome complex. Forms a hexameric ring-like arrangement composed of 3 Rrp41-Rrp42 heterodimers. The hexameric ring associates with a trimer of Rrp4 and/or Csl4 subunits.

The protein localises to the cytoplasm. Functionally, non-catalytic component of the exosome, which is a complex involved in RNA degradation. Contributes to the structuring of the Rrp41 active site. This is Exosome complex component Rrp42 from Pyrococcus abyssi (strain GE5 / Orsay).